A 441-amino-acid polypeptide reads, in one-letter code: Mannose-6-phosphate isomerase 2 (441 aa).

Residues Q131, H133, E158, and H296 each contribute to the Zn(2+) site. The active site involves R315.

The protein belongs to the mannose-6-phosphate isomerase type 1 family. Zn(2+) serves as cofactor. Not expressed in any organs under light (at protein level).

It catalyses the reaction D-mannose 6-phosphate = D-fructose 6-phosphate. It participates in nucleotide-sugar biosynthesis; GDP-alpha-D-mannose biosynthesis; alpha-D-mannose 1-phosphate from D-fructose 6-phosphate: step 1/2. Its activity is regulated as follows. Inhibited by EDTA, Zn(2+), Cd(2+), DTT, p-chloromercuribenzoate and L-ascorbic acid (AsA). Functionally, involved in the synthesis of the GDP-mannose and dolichol-phosphate-mannose required for a number of critical mannosyl transfer reactions. This is Mannose-6-phosphate isomerase 2 (PMI2) from Arabidopsis thaliana (Mouse-ear cress).